The sequence spans 1745 residues: MGNRRDLGQPRAGLCLLLAALQLLPGTQADPVDVLKALGVQGGQAGVPEGPGFCPQRTPEGDRAFRIGQASTLGIPTWELFPEGHFPENFSLLITLRGQPANQSVLLSIYDERGARQLGLALGPALGLLGDPFRPLPQQVNLTDGRWHRVAVSIDGEMVTLVADCEAQPPVLGHGPRFISIAGLTVLGTQDLGEKTFEGDIQELLISPDPQAAFQACERYLPDCDNLAPAATVAPQGEPETPRPRRKGKGKGRKKGRGRKGKGRKKNKEIWTSSPPPDSAENQTSTDIPKTETPAPNLPPTPTPLVVTSTVTTGLNATILERSLDPDSGTELGTLETKAAREDEEGDDSTMGPDFRAAEYPSRTQFQIFPGAGEKGAKGEPAVIEKGQQFEGPPGAPGPQGVVGPSGPPGPPGFPGDPGPPGPAGLPGIPGIDGIRGPPGTVIMMPFQFAGGSFKGPPVSFQQAQAQAVLQQTQLSMKGPPGPVGLTGRPGPVGLPGHPGLKGEEGAEGPQGPRGLQGPHGPPGRVGKMGRPGADGARGLPGDTGPKGDRGFDGLPGLPGEKGQRGDFGHVGQPGPPGEDGERGAEGPPGPTGQAGEPGPRGLLGPRGSPGPTGRPGVTGIDGAPGAKGNVGPPGEPGPPGQQGNHGSQGLPGPQGLIGTPGEKGPPGNPGIPGLPGSDGPLGHPGHEGPTGEKGAQGPPGSAGPPGYPGPRGVKGTSGNRGLQGEKGEKGEDGFPGFKGDVGLKGDQGKPGAPGPRGEDGPEGPKGQAGQAGEEGPPGSAGEKGKLGVPGLPGYPGRPGPKGSIGFPGPLGPIGEKGKSGKTGQPGLEGERGPPGSRGERGQPGATGQPGPKGDVGQDGAPGIPGEKGLPGLQGPPGFPGPKGPPGHQGKDGRPGHPGQRGELGFQGQTGPPGPAGVLGPQGKTGEVGPLGERGPPGPPGPPGEQGLPGLEGREGAKGELGPPGPLGKEGPAGLRGFPGPKGGPGDPGPTGLKGDKGPPGPVGANGSPGERGPLGPAGGIGLPGQSGSEGPVGPAGKKGSRGERGPPGPTGKDGIPGPLGPLGPPGAAGPSGEEGDKGDVGAPGHKGSKGDKGDAGPPGQPGIRGPAGHPGPPGADGAQGRRGPPGLFGQKGDDGVRGFVGVIGPPGLQGLPGPPGEKGEVGDVGSMGPHGAPGPRGPQGPTGSEGTPGLPGGVGQPGAVGEKGERGDAGDPGPPGAPGIPGPKGDIGEKGDSGPSGAAGPPGKKGPPGEDGAKGSVGPTGLPGDLGPPGDPGVSGIDGSPGEKGDPGDVGGPGPPGASGEPGAPGPPGKRGPSGHMGREGREGEKGAKGEPGPDGPPGRTGPMGARGPPGRVGPEGLRGIPGPVGEPGLLGAPGQMGPPGPLGPSGLPGLKGDTGPKGEKGHIGLIGLIGPPGEAGEKGDQGLPGVQGPPGPKGDPGPPGPIGSLGHPGPPGVAGPLGQKGSKGSPGSMGPRGDTGPAGPPGPPGAPAELHGLRRRRRFVPVPLPVVEGGLEEVLASLTSLSLELEQLRRPPGTAERPGLVCHELHRNHPHLPDGEYWIDPNQGCARDSFRVFCNFTAGGETCLYPDKKFEIVKLASWSKEKPGGWYSTFRRGKKFSYVDADGSPVNVVQLNFLKLLSATARQNFTYSCQNAAAWLDEATGDYSHSARFLGTNGEELSFNQTTAATVSVPQDGCRLRKGQTKTLFEFSSSRAGFLPLWDVAATDFGQTNQKFGFELGPVCFSS.

The signal sequence occupies residues 1-29; it reads MGNRRDLGQPRAGLCLLLAALQLLPGTQA. In terms of domain architecture, Laminin G-like spans 62 to 224; that stretch reads DRAFRIGQAS…QACERYLPDC (163 aa). Residues Asn-102 and Asn-141 are each glycosylated (N-linked (GlcNAc...) asparagine). A nonhelical region region spans residues 211 to 391; the sequence is QAAFQACERY…AVIEKGQQFE (181 aa). Disordered regions lie at residues 230 to 304, 322 to 362, 387 to 439, and 476 to 1492; these read AATV…TPTP, RSLD…EYPS, GQQF…RGPP, and SMKG…PAEL. A compositionally biased stretch (basic residues) spans 244-267; it reads PRRKGKGKGRKKGRGRKGKGRKKN. A glycan (O-linked (Xyl...) (chondroitin sulfate) serine) is linked at Ser-349. 2 consecutive Collagen-like domains span residues 391–440 and 482–538; these read EGPP…GPPG and GPVG…DGAR. Positions 392-1489 are triple-helical region; it reads GPPGAPGPQG…AGPPGPPGAP (1098 aa). Residues 406–424 show a composition bias toward pro residues; that stretch reads SGPPGPPGFPGDPGPPGPA. 3 stretches are compositionally biased toward low complexity: residues 426–439, 489–499, and 597–619; these read LPGI…RGPP, RPGPVGLPGHP, and EPGP…PGVT. The segment covering 724–733 has biased composition (basic and acidic residues); the sequence is QGEKGEKGED. Residues 765 to 792 are compositionally biased toward low complexity; the sequence is PKGQAGQAGEEGPPGSAGEKGKLGVPGL. Collagen-like domains are found at residues 824–877, 905–950, and 951–989; these read GQPG…QGPP, GFQG…GLPG, and LEGR…GDPG. Residues 967–979 show a composition bias toward low complexity; sequence LGKEGPAGLRGFP. Positions 1016-1025 are enriched in gly residues; the sequence is GPAGGIGLPG. 2 stretches are compositionally biased toward low complexity: residues 1116–1126 and 1141–1152; these read ADGAQGRRGPP and VGVIGPPGLQGL. Gly residues predominate over residues 1190–1199; that stretch reads GLPGGVGQPG. Positions 1213 to 1222 are enriched in pro residues; that stretch reads PGPPGAPGIP. Over residues 1234–1243 the composition is skewed to low complexity; the sequence is SGPSGAAGPP. The span at 1318-1330 shows a compositional bias: basic and acidic residues; the sequence is MGREGREGEKGAK. Positions 1405 to 1416 are enriched in low complexity; it reads IGLIGLIGPPGE. Pro residues predominate over residues 1429 to 1443; it reads QGPPGPKGDPGPPGP. In terms of domain architecture, Collagen-like 6 spans 1430–1488; the sequence is GPPGPKGDPGPPGPIGSLGHPGPPGVAGPLGQKGSKGSPGSMGPRGDTGPAGPPGPPGA. The span at 1458–1479 shows a compositional bias: low complexity; sequence PLGQKGSKGSPGSMGPRGDTGP. Residues 1514–1744 form the Fibrillar collagen NC1 domain; the sequence is EEVLASLTSL…GFELGPVCFS (231 aa). 2 disulfides stabilise this stretch: Cys-1585–Cys-1742 and Cys-1651–Cys-1696.

It belongs to the fibrillar collagen family. As to quaternary structure, trimers of two alpha 1(V) and one alpha 2(V) chains in most tissues and trimers of one alpha 1(V), one alpha 2(V), and one alpha 3(V) chains in placenta. Post-translationally, prolines at the third position of the tripeptide repeating unit (G-X-Y) are hydroxylated in some or all of the chains. Detected in fibroblasts (at protein level). Detected in urine (at protein level).

The protein resides in the secreted. It is found in the extracellular space. Its subcellular location is the extracellular matrix. Functionally, type V collagen is a member of group I collagen (fibrillar forming collagen). It is a minor connective tissue component of nearly ubiquitous distribution. Type V collagen binds to DNA, heparan sulfate, thrombospondin, heparin, and insulin. In Homo sapiens (Human), this protein is Collagen alpha-3(V) chain (COL5A3).